Reading from the N-terminus, the 204-residue chain is Thymidylate kinase (204 aa).

Residue 11–18 (GLDKSGKT) coordinates ATP.

This sequence belongs to the thymidylate kinase family.

The catalysed reaction is dTMP + ATP = dTDP + ADP. The protein operates within pyrimidine metabolism; dTTP biosynthesis. The polypeptide is Thymidylate kinase (TMK) (Ectromelia virus (strain Moscow) (ECTV)).